The primary structure comprises 205 residues: Protein Nef (205 aa).

Residue Gly-2 is the site of N-myristoyl glycine; by host attachment. Ser-6 carries the post-translational modification Phosphoserine; by host. The interval Glu-62–Glu-65 is acidic; interacts with host PACS1 and PACS2; stabilizes the interaction of NEF/MHC-I with host AP1M1; necessary for MHC-I internalization. The tract at residues Pro-69–Pro-78 is SH3-binding; interaction with Src family tyrosine kinases. The PxxP; stabilizes the interaction of NEF/MHC-I with host AP1M1; necessary for MHC-I internalization motif lies at Pro-72–Pro-75. The segment at Asp-108 to Trp-124 is mediates dimerization, Nef-PTE1 interaction. The segment at Val-148–Val-179 is binding to ATP6V1H. A Dileucine internalization motif; necessary for CD4 internalization motif is present at residues Leu-163 to Leu-164. The Diacidic; necessary for CD4 internalization motif lies at Asp-173–Asp-174.

It belongs to the lentivirus primate group Nef protein family. In terms of assembly, monomer; cytosolic form. Homodimer; membrane bound form. Interacts with Nef associated p21-activated kinase (PAK2); this interaction activates PAK2. Associates with the Nef-MHC-I-AP1 complex; this complex is required for MHC-I internalization. Interacts (via C-terminus) with host PI3-kinase. Interacts with host PACS1; this interaction seems to be weak. Interacts with host PACS2. Interacts with host LCK and MAPK3; these interactions inhibit the kinase activity of the latter. Interacts with host ATP6V1H; this interaction may play a role in CD4 endocytosis. Associates with the CD4-Nef-AP2 complex; this complex is required for CD4 internalization. Interacts with host AP2 subunit alpha and AP2 subunit sigma2. Interacts with TCR-zeta chain; this interaction up-regulates the Fas ligand (FasL) surface expression. Interacts with host HCK, LYN, and SRC; these interactions activate the Src family kinases. Interacts with MAP3K5; this interaction inhibits the Fas and TNFR-mediated death signals. Interacts with beta-COP and PTE1. Interacts with human RACK1; this increases Nef phosphorylation by PKC. Interacts with TP53; this interaction decreases the half-life of TP53, protecting the infected cell against p53-mediated apoptosis. The virion-associated Nef proteins are cleaved by the viral protease to release the soluble C-terminal core protein. Nef is probably cleaved concomitantly with viral structural proteins on maturation of virus particles. Post-translationally, myristoylated. In terms of processing, phosphorylated on serine residues, probably by host PKCdelta and theta.

It localises to the host cell membrane. It is found in the virion. Its subcellular location is the secreted. The protein resides in the host Golgi apparatus membrane. Functionally, factor of infectivity and pathogenicity, required for optimal virus replication. Alters numerous pathways of T-lymphocyte function and down-regulates immunity surface molecules in order to evade host defense and increase viral infectivity. Alters the functionality of other immunity cells, like dendritic cells, monocytes/macrophages and NK cells. In infected CD4(+) T-lymphocytes, down-regulates the surface MHC-I, mature MHC-II, CD4, CD28, CCR5 and CXCR4 molecules. Mediates internalization and degradation of host CD4 through the interaction of with the cytoplasmic tail of CD4, the recruitment of AP-2 (clathrin adapter protein complex 2), internalization through clathrin coated pits, and subsequent transport to endosomes and lysosomes for degradation. Diverts host MHC-I molecules to the trans-Golgi network-associated endosomal compartments by an endocytic pathway to finally target them for degradation. MHC-I down-regulation may involve AP-1 (clathrin adapter protein complex 1) or possibly Src family kinase-ZAP70/Syk-PI3K cascade recruited by PACS2. In consequence infected cells are masked for immune recognition by cytotoxic T-lymphocytes. Decreasing the number of immune receptors also prevents reinfection by more HIV particles (superinfection). Down-regulates host SERINC3 and SERINC5 thereby excluding these proteins from the viral particles. Virion infectivity is drastically higher when SERINC3 or SERINC5 are excluded from the viral envelope, because these host antiviral proteins impair the membrane fusion event necessary for subsequent virion penetration. In terms of biological role, bypasses host T-cell signaling by inducing a transcriptional program nearly identical to that of anti-CD3 cell activation. Interaction with TCR-zeta chain up-regulates the Fas ligand (FasL). Increasing surface FasL molecules and decreasing surface MHC-I molecules on infected CD4(+) cells send attacking cytotoxic CD8+ T-lymphocytes into apoptosis. Its function is as follows. Plays a role in optimizing the host cell environment for viral replication without causing cell death by apoptosis. Protects the infected cells from apoptosis in order to keep them alive until the next virus generation is ready to strike. Inhibits the Fas and TNFR-mediated death signals by blocking MAP3K5/ASK1. Decreases the half-life of TP53, protecting the infected cell against p53-mediated apoptosis. Inhibits the apoptotic signals regulated by the Bcl-2 family proteins through the formation of a Nef/PI3-kinase/PAK2 complex that leads to activation of PAK2 and induces phosphorylation of host BAD. Functionally, extracellular Nef protein targets CD4(+) T-lymphocytes for apoptosis by interacting with CXCR4 surface receptors. The protein is Protein Nef of Homo sapiens (Human).